The chain runs to 142 residues: Endoribonuclease YbeY (142 aa).

Positions 107, 111, and 117 each coordinate Zn(2+).

Belongs to the endoribonuclease YbeY family. Zn(2+) is required as a cofactor.

Its subcellular location is the cytoplasm. Functionally, single strand-specific metallo-endoribonuclease involved in late-stage 70S ribosome quality control and in maturation of the 3' terminus of the 16S rRNA. The chain is Endoribonuclease YbeY from Chlorobium phaeobacteroides (strain DSM 266 / SMG 266 / 2430).